A 361-amino-acid polypeptide reads, in one-letter code: UDP-N-acetylglucosamine--N-acetylmuramyl-(pentapeptide) pyrophosphoryl-undecaprenol N-acetylglucosamine transferase (361 aa).

Residues 13 to 15 (TGG), Asn-125, Arg-167, Ser-196, Ile-251, 270 to 275 (ALTVTE), and Gln-296 each bind UDP-N-acetyl-alpha-D-glucosamine.

Belongs to the glycosyltransferase 28 family. MurG subfamily.

It is found in the cell inner membrane. The catalysed reaction is di-trans,octa-cis-undecaprenyl diphospho-N-acetyl-alpha-D-muramoyl-L-alanyl-D-glutamyl-meso-2,6-diaminopimeloyl-D-alanyl-D-alanine + UDP-N-acetyl-alpha-D-glucosamine = di-trans,octa-cis-undecaprenyl diphospho-[N-acetyl-alpha-D-glucosaminyl-(1-&gt;4)]-N-acetyl-alpha-D-muramoyl-L-alanyl-D-glutamyl-meso-2,6-diaminopimeloyl-D-alanyl-D-alanine + UDP + H(+). Its pathway is cell wall biogenesis; peptidoglycan biosynthesis. Functionally, cell wall formation. Catalyzes the transfer of a GlcNAc subunit on undecaprenyl-pyrophosphoryl-MurNAc-pentapeptide (lipid intermediate I) to form undecaprenyl-pyrophosphoryl-MurNAc-(pentapeptide)GlcNAc (lipid intermediate II). In Psychrobacter cryohalolentis (strain ATCC BAA-1226 / DSM 17306 / VKM B-2378 / K5), this protein is UDP-N-acetylglucosamine--N-acetylmuramyl-(pentapeptide) pyrophosphoryl-undecaprenol N-acetylglucosamine transferase.